The sequence spans 337 residues: Biotin synthase (337 aa).

The Radical SAM core domain maps to 55 to 284 (YFKNTIELCS…KKTILLAGGK (230 aa)). The [4Fe-4S] cluster site is built by C73, C77, and C80. 3 residues coordinate [2Fe-2S] cluster: C117, C149, and C209.

This sequence belongs to the radical SAM superfamily. Biotin synthase family. As to quaternary structure, homodimer. Requires [4Fe-4S] cluster as cofactor. [2Fe-2S] cluster serves as cofactor.

It carries out the reaction (4R,5S)-dethiobiotin + (sulfur carrier)-SH + 2 reduced [2Fe-2S]-[ferredoxin] + 2 S-adenosyl-L-methionine = (sulfur carrier)-H + biotin + 2 5'-deoxyadenosine + 2 L-methionine + 2 oxidized [2Fe-2S]-[ferredoxin]. The protein operates within cofactor biosynthesis; biotin biosynthesis; biotin from 7,8-diaminononanoate: step 2/2. In terms of biological role, catalyzes the conversion of dethiobiotin (DTB) to biotin by the insertion of a sulfur atom into dethiobiotin via a radical-based mechanism. This is Biotin synthase from Caldicellulosiruptor bescii (strain ATCC BAA-1888 / DSM 6725 / KCTC 15123 / Z-1320) (Anaerocellum thermophilum).